The primary structure comprises 266 residues: Uracil-DNA glycosylase (266 aa).

The tract at residues 1-25 is disordered; the sequence is MTRRADPAQATLFDDDEPAGAPTAT. Asp-97 functions as the Proton acceptor in the catalytic mechanism.

The protein belongs to the uracil-DNA glycosylase (UDG) superfamily. UNG family.

Its subcellular location is the cytoplasm. It catalyses the reaction Hydrolyzes single-stranded DNA or mismatched double-stranded DNA and polynucleotides, releasing free uracil.. Excises uracil residues from the DNA which can arise as a result of misincorporation of dUMP residues by DNA polymerase or due to deamination of cytosine. In Ralstonia nicotianae (strain ATCC BAA-1114 / GMI1000) (Ralstonia solanacearum), this protein is Uracil-DNA glycosylase.